The chain runs to 385 residues: Anhydro-N-acetylmuramic acid kinase (385 aa).

12–19 (GTSLDGID) is a binding site for ATP.

The protein belongs to the anhydro-N-acetylmuramic acid kinase family.

The catalysed reaction is 1,6-anhydro-N-acetyl-beta-muramate + ATP + H2O = N-acetyl-D-muramate 6-phosphate + ADP + H(+). Its pathway is amino-sugar metabolism; 1,6-anhydro-N-acetylmuramate degradation. It functions in the pathway cell wall biogenesis; peptidoglycan recycling. Its function is as follows. Catalyzes the specific phosphorylation of 1,6-anhydro-N-acetylmuramic acid (anhMurNAc) with the simultaneous cleavage of the 1,6-anhydro ring, generating MurNAc-6-P. Is required for the utilization of anhMurNAc either imported from the medium or derived from its own cell wall murein, and thus plays a role in cell wall recycling. The polypeptide is Anhydro-N-acetylmuramic acid kinase (Bacillus thuringiensis (strain Al Hakam)).